The following is an 856-amino-acid chain: Envelope glycoprotein gp160 (856 aa).

The signal sequence occupies residues 1-32 (MRVKEKYQHLWRWGWRWGTMLLGMLMICSATE). At 33-684 (KLWVTVYYGV…ITNWLWYIKL (652 aa)) the chain is on the extracellular side. Cysteines 54 and 74 form a disulfide. Asn88, Asn136, Asn141, Asn156, Asn160, Asn186, Asn197, Asn230, Asn234, Asn241, Asn262, Asn276, Asn289, Asn295, Asn301, Asn332, Asn339, and Asn356 each carry an N-linked (GlcNAc...) asparagine; by host glycan. Cystine bridges form between Cys119/Cys205, Cys126/Cys196, Cys131/Cys157, Cys218/Cys247, and Cys228/Cys239. The V1 stretch occupies residues 131-156 (CTDLKNDTNTNSSSGRMIMEKGEIKN). Residues 157 to 196 (CSFNISTSIRGKVQKEYAFFYKLDIIPIDNDTTSYKLTSC) are V2. The V3 stretch occupies residues 296–330 (CTRPNNNTRKRIRIQRGPGRAFVTIGKIGNMRQAH). Cys296 and Cys331 form a disulfide bridge. The interval 364–374 (SSGGDPEIVTH) is CD4-binding loop. 2 cysteine pairs are disulfide-bonded: Cys378/Cys445 and Cys385/Cys418. The tract at residues 385 to 418 (CNSTQLFNSTWFNSTWSTEGSNNTEGSDTITLPC) is V4. Residues Asn386, Asn392, Asn397, Asn406, Asn448, and Asn463 are each glycosylated (N-linked (GlcNAc...) asparagine; by host). V5 stretches follow at residues 461 to 471 (SNNESEIFRPG) and 463 to 471 (NESEIFRPG). Residues 512 to 532 (AVGIGALFLGFLGAAGSTMGA) form a fusion peptide region. The segment at 574-592 (KQLQARILAVERYLKDQQL) is immunosuppression. A disulfide bridge connects residues Cys598 and Cys604. 5 N-linked (GlcNAc...) asparagine; by host glycosylation sites follow: Asn611, Asn616, Asn624, Asn637, and Asn674. A coiled-coil region spans residues 633–667 (REINNYTSLIHSLIEESQNQQEKNEQELLELDKWA). The segment at 662–683 (ELDKWASLWNWFNITNWLWYIK) is MPER; binding to GalCer. A helical membrane pass occupies residues 685-705 (FIMIVGGLVGLRIVFAVLSIV). Topologically, residues 706–856 (NRVRQGYSPL…IRQGLERILL (151 aa)) are cytoplasmic. Positions 712-715 (YSPL) match the YXXL motif; contains endocytosis signal motif. The interval 718–742 (QTHLPTPRGPDRPEGIEEEGGERDR) is disordered. 2 S-palmitoyl cysteine; by host lipidation sites follow: Cys764 and Cys837. Residues 855–856 (LL) carry the Di-leucine internalization motif motif.

It belongs to the HIV-1 env protein family. In terms of assembly, the mature envelope protein (Env) consists of a homotrimer of non-covalently associated gp120-gp41 heterodimers. The resulting complex protrudes from the virus surface as a spike. There seems to be as few as 10 spikes on the average virion. Interacts with host CD4, CCR5 and CXCR4. Gp120 also interacts with the C-type lectins CD209/DC-SIGN and CLEC4M/DC-SIGNR (collectively referred to as DC-SIGN(R)). Gp120 and gp41 interact with GalCer. Gp120 interacts with host ITGA4/ITGB7 complex; on CD4+ T-cells, this interaction results in rapid activation of integrin ITGAL/LFA-1, which facilitates efficient cell-to-cell spreading of HIV-1. Gp120 interacts with cell-associated heparan sulfate; this interaction increases virus infectivity on permissive cells and may be involved in infection of CD4- cells. The mature envelope protein (Env) consists of a homotrimer of non-covalently associated gp120-gp41 heterodimers. The resulting complex protrudes from the virus surface as a spike. There seems to be as few as 10 spikes on the average virion. Post-translationally, palmitoylation of the transmembrane protein and of Env polyprotein (prior to its proteolytic cleavage) is essential for their association with host cell membrane lipid rafts. Palmitoylation is therefore required for envelope trafficking to classical lipid rafts, but not for viral replication. In terms of processing, highly glycosylated by host. The high number of glycan on the protein is reffered to as 'glycan shield' because it contributes to hide protein sequence from adaptive immune system. Specific enzymatic cleavages in vivo yield mature proteins. Envelope glycoproteins are synthesized as an inactive precursor that is heavily N-glycosylated and processed likely by host cell furin in the Golgi to yield the mature SU and TM proteins. The cleavage site between SU and TM requires the minimal sequence [KR]-X-[KR]-R. About 2 of the 9 disulfide bonds of gp41 are reduced by P4HB/PDI, following binding to CD4 receptor.

It localises to the virion membrane. It is found in the host cell membrane. Its subcellular location is the host endosome membrane. Oligomerizes in the host endoplasmic reticulum into predominantly trimers. In a second time, gp160 transits in the host Golgi, where glycosylation is completed. The precursor is then proteolytically cleaved in the trans-Golgi and thereby activated by cellular furin or furin-like proteases to produce gp120 and gp41. Functionally, attaches the virus to the host lymphoid cell by binding to the primary receptor CD4. This interaction induces a structural rearrangement creating a high affinity binding site for a chemokine coreceptor like CXCR4 and/or CCR5. Acts as a ligand for CD209/DC-SIGN and CLEC4M/DC-SIGNR, which are respectively found on dendritic cells (DCs), and on endothelial cells of liver sinusoids and lymph node sinuses. These interactions allow capture of viral particles at mucosal surfaces by these cells and subsequent transmission to permissive cells. HIV subverts the migration properties of dendritic cells to gain access to CD4+ T-cells in lymph nodes. Virus transmission to permissive T-cells occurs either in trans (without DCs infection, through viral capture and transmission), or in cis (following DCs productive infection, through the usual CD4-gp120 interaction), thereby inducing a robust infection. In trans infection, bound virions remain infectious over days and it is proposed that they are not degraded, but protected in non-lysosomal acidic organelles within the DCs close to the cell membrane thus contributing to the viral infectious potential during DCs' migration from the periphery to the lymphoid tissues. On arrival at lymphoid tissues, intact virions recycle back to DCs' cell surface allowing virus transmission to CD4+ T-cells. Its function is as follows. Acts as a class I viral fusion protein. Under the current model, the protein has at least 3 conformational states: pre-fusion native state, pre-hairpin intermediate state, and post-fusion hairpin state. During fusion of viral and target intracellular membranes, the coiled coil regions (heptad repeats) assume a trimer-of-hairpins structure, positioning the fusion peptide in close proximity to the C-terminal region of the ectodomain. The formation of this structure appears to drive apposition and subsequent fusion of viral and target cell membranes. Complete fusion occurs in host cell endosomes and is dynamin-dependent, however some lipid transfer might occur at the plasma membrane. The virus undergoes clathrin-dependent internalization long before endosomal fusion, thus minimizing the surface exposure of conserved viral epitopes during fusion and reducing the efficacy of inhibitors targeting these epitopes. Membranes fusion leads to delivery of the nucleocapsid into the cytoplasm. This chain is Envelope glycoprotein gp160, found in Homo sapiens (Human).